Consider the following 515-residue polypeptide: MTKRVLISVSDKAGIVEFAQELKKLGWEIISTGGTKVALDNAGVETIAIDDVTGFPEMMDGRVKTLHPNIHGGLLARRDLDSHLEAANENQIELIDLVVVNLYPFKETILKPDVTYADAVENIDIGGPSMLRSAAKNHASVTVVVDPADYTVVLDELSANGETTYETRQRLAAKVFRHTAAYDALIAEYFTAQVGESKPEKLTLTYDLKQAMRYGENPQQDADFYQKALPTDYSIASAKQLNGKELSFNNIRDADAAIRIIRDFKDRPTVVALKHMNPCGIGQADDIETAWDYAYESDPVSIFGGIAVLNREVDAATAEKMHGVFLEIIIAPSYTDEALAILINKKKNLRILALPFNAQEASEVEAEYTGVVGGLLVQNQDVVKESPADWQVVTKRQPTETEATALEFAWKAIKYVKSNGIIVTNDHMTLGVGPGQTNRVASVRLAIDQAKDRLDGAVLASDAFFPFADNVEEIAKAGIKAIIQPGGSVRDQESIEAADKYGLTMVFTGVRHFRH.

In terms of domain architecture, MGS-like spans 1 to 145; the sequence is MTKRVLISVS…KNHASVTVVV (145 aa).

It belongs to the PurH family.

The enzyme catalyses (6R)-10-formyltetrahydrofolate + 5-amino-1-(5-phospho-beta-D-ribosyl)imidazole-4-carboxamide = 5-formamido-1-(5-phospho-D-ribosyl)imidazole-4-carboxamide + (6S)-5,6,7,8-tetrahydrofolate. It catalyses the reaction IMP + H2O = 5-formamido-1-(5-phospho-D-ribosyl)imidazole-4-carboxamide. Its pathway is purine metabolism; IMP biosynthesis via de novo pathway; 5-formamido-1-(5-phospho-D-ribosyl)imidazole-4-carboxamide from 5-amino-1-(5-phospho-D-ribosyl)imidazole-4-carboxamide (10-formyl THF route): step 1/1. It functions in the pathway purine metabolism; IMP biosynthesis via de novo pathway; IMP from 5-formamido-1-(5-phospho-D-ribosyl)imidazole-4-carboxamide: step 1/1. This is Bifunctional purine biosynthesis protein PurH from Streptococcus pneumoniae serotype 2 (strain D39 / NCTC 7466).